A 60-amino-acid polypeptide reads, in one-letter code: Large ribosomal subunit protein uL30 (60 aa).

Belongs to the universal ribosomal protein uL30 family. In terms of assembly, part of the 50S ribosomal subunit.

The polypeptide is Large ribosomal subunit protein uL30 (Burkholderia ambifaria (strain MC40-6)).